A 226-amino-acid chain; its full sequence is Small ribosomal subunit protein uS3 (226 aa).

In terms of domain architecture, KH type-2 spans 39–107; it reads IRKFIKNKLY…NILINITEIK (69 aa).

This sequence belongs to the universal ribosomal protein uS3 family. As to quaternary structure, part of the 30S ribosomal subunit. Forms a tight complex with proteins S10 and S14.

Functionally, binds the lower part of the 30S subunit head. Binds mRNA in the 70S ribosome, positioning it for translation. The protein is Small ribosomal subunit protein uS3 of Acetivibrio thermocellus (strain ATCC 27405 / DSM 1237 / JCM 9322 / NBRC 103400 / NCIMB 10682 / NRRL B-4536 / VPI 7372) (Clostridium thermocellum).